A 520-amino-acid chain; its full sequence is Amine oxidase [flavin-containing] B (520 aa).

The Cytoplasmic portion of the chain corresponds to 1–489 (MNSKCDVVVV…TFLERHLPSV (489 aa)). An N6-acetyllysine modification is found at Lys52. Cys397 is modified (S-8alpha-FAD cysteine). The helical; Anchor for type IV membrane protein transmembrane segment at 490-516 (PGLLRLIRLTTVVSAVALGFLAQKRGL) threads the bilayer. At 517 to 520 (LLRI) the chain is on the mitochondrial intermembrane side.

It belongs to the flavin monoamine oxidase family. Monomer, homo- or heterodimer (containing two subunits of similar size). Each subunit contains a covalently bound flavin. Enzymatically active as monomer. Requires FAD as cofactor.

The protein localises to the mitochondrion outer membrane. The catalysed reaction is a secondary aliphatic amine + O2 + H2O = a primary amine + an aldehyde + H2O2. It catalyses the reaction (R)-adrenaline + O2 + H2O = (R)-3,4-dihydroxymandelaldehyde + methylamine + H2O2. The enzyme catalyses a primary methyl amine + O2 + H2O = an aldehyde + H2O2 + NH4(+). It carries out the reaction benzylamine + O2 + H2O = benzaldehyde + H2O2 + NH4(+). The catalysed reaction is dopamine + O2 + H2O = 3,4-dihydroxyphenylacetaldehyde + H2O2 + NH4(+). It catalyses the reaction tyramine + O2 + H2O = (4-hydroxyphenyl)acetaldehyde + H2O2 + NH4(+). The enzyme catalyses (R)-noradrenaline + O2 + H2O = (R)-3,4-dihydroxymandelaldehyde + H2O2 + NH4(+). It carries out the reaction 2-phenylethylamine + O2 + H2O = 2-phenylacetaldehyde + H2O2 + NH4(+). The catalysed reaction is N-acetylputrescine + O2 + H2O = 4-acetamidobutanal + H2O2 + NH4(+). Functionally, catalyzes the oxidative deamination of primary and some secondary amines such as neurotransmitters, and exogenous amines including the tertiary amine, neurotoxin 1-methyl-4-phenyl-1,2,3,6-tetrahydropyridine (MPTP), with concomitant reduction of oxygen to hydrogen peroxide and participates in the metabolism of neuroactive and vasoactive amines in the central nervous system and peripheral tissues. Preferentially degrades benzylamine and phenylethylamine. The protein is Amine oxidase [flavin-containing] B of Cavia porcellus (Guinea pig).